The chain runs to 257 residues: RLA class II histocompatibility antigen, DP beta chain (257 aa).

An N-terminal signal peptide occupies residues 1 to 29 (MRPCRSLRTAALAVVLTVLLHPVALGRAT). The interval 30 to 120 (PGESEQNYLW…LFQGLPVLLQ (91 aa)) is beta-1. Over 30–224 (PGESEQNYLW…KAQSDSARSK (195 aa)) the chain is Extracellular. 2 cysteine pairs are disulfide-bonded: cysteine 45-cysteine 105 and cysteine 143-cysteine 199. Asparagine 49 carries an N-linked (GlcNAc...) asparagine glycan. The tract at residues 121–214 (TQPRVSVSPS…SLDSPITVEW (94 aa)) is beta-2. Residues 123 to 211 (PRVSVSPSKK…EHPSLDSPIT (89 aa)) form the Ig-like C1-type domain. The tract at residues 215–224 (KAQSDSARSK) is connecting peptide. A helical transmembrane segment spans residues 225-245 (MLAGVGGLVLGLVSLAVGVFM). The Cytoplasmic portion of the chain corresponds to 246-257 (HRRSKKAQQGCR).

The protein belongs to the MHC class II family.

The protein localises to the membrane. In Oryctolagus cuniculus (Rabbit), this protein is RLA class II histocompatibility antigen, DP beta chain.